We begin with the raw amino-acid sequence, 158 residues long: Ribonuclease H (158 aa).

In terms of domain architecture, RNase H type-1 spans 9–155 (AFKPVELYTD…CDKLAVAAYQ (147 aa)). 4 residues coordinate Mg(2+): Asp-18, Glu-58, Asp-80, and Asp-147.

The protein belongs to the RNase H family. Monomer. Mg(2+) is required as a cofactor.

Its subcellular location is the cytoplasm. It catalyses the reaction Endonucleolytic cleavage to 5'-phosphomonoester.. Endonuclease that specifically degrades the RNA of RNA-DNA hybrids. This chain is Ribonuclease H, found in Rhodopirellula baltica (strain DSM 10527 / NCIMB 13988 / SH1).